Consider the following 594-residue polypeptide: Golgi-associated RAB2 interactor protein 4 (594 aa).

The segment at 387 to 524 is disordered; it reads MDAAAGPPVS…TSSGSSKGLG (138 aa). Over residues 396–406 the composition is skewed to polar residues; that stretch reads STRQSKSSLSG. Basic and acidic residues-rich tracts occupy residues 408–433, 442–455, and 468–477; these read HGRE…DRAL, TGES…DKIA, and ANRDDKKEKG. The span at 511–520 shows a compositional bias: polar residues; it reads SLWTTSSGSS.

Belongs to the GARIN family. As to quaternary structure, interacts (via N-terminus) with RAB2B (in GTP-bound form).

Its subcellular location is the golgi apparatus. Its function is as follows. RAB2B effector protein required for the compacted Golgi morphology, probably through interaction with small GTPase RAB2B. In Homo sapiens (Human), this protein is Golgi-associated RAB2 interactor protein 4.